Here is a 108-residue protein sequence, read N- to C-terminus: ATP-dependent Clp protease adapter protein ClpS (108 aa).

This sequence belongs to the ClpS family. Binds to the N-terminal domain of the chaperone ClpA.

In terms of biological role, involved in the modulation of the specificity of the ClpAP-mediated ATP-dependent protein degradation. This Ralstonia pickettii (strain 12J) protein is ATP-dependent Clp protease adapter protein ClpS.